Consider the following 197-residue polypeptide: Probable chorismate pyruvate-lyase (197 aa).

Arginine 66, leucine 104, and glutamate 169 together coordinate substrate.

Belongs to the UbiC family.

The protein localises to the cytoplasm. The enzyme catalyses chorismate = 4-hydroxybenzoate + pyruvate. Its pathway is cofactor biosynthesis; ubiquinone biosynthesis. In terms of biological role, removes the pyruvyl group from chorismate, with concomitant aromatization of the ring, to provide 4-hydroxybenzoate (4HB) for the ubiquinone pathway. The polypeptide is Probable chorismate pyruvate-lyase (Albidiferax ferrireducens (strain ATCC BAA-621 / DSM 15236 / T118) (Rhodoferax ferrireducens)).